The chain runs to 222 residues: Putative thymidylate synthase (222 aa).

C139 is a catalytic residue.

Belongs to the thymidylate synthase family. Archaeal-type ThyA subfamily. As to quaternary structure, monomer.

Its subcellular location is the cytoplasm. The protein operates within pyrimidine metabolism; dTTP biosynthesis. In terms of biological role, may catalyze the biosynthesis of dTMP using an unknown cosubstrate. This chain is Putative thymidylate synthase, found in Methanocaldococcus jannaschii (strain ATCC 43067 / DSM 2661 / JAL-1 / JCM 10045 / NBRC 100440) (Methanococcus jannaschii).